The following is an 876-amino-acid chain: Alanine--tRNA ligase (876 aa).

Residues His565, His569, Cys667, and His671 each contribute to the Zn(2+) site.

The protein belongs to the class-II aminoacyl-tRNA synthetase family. Zn(2+) serves as cofactor.

Its subcellular location is the cytoplasm. It catalyses the reaction tRNA(Ala) + L-alanine + ATP = L-alanyl-tRNA(Ala) + AMP + diphosphate. Catalyzes the attachment of alanine to tRNA(Ala) in a two-step reaction: alanine is first activated by ATP to form Ala-AMP and then transferred to the acceptor end of tRNA(Ala). Also edits incorrectly charged Ser-tRNA(Ala) and Gly-tRNA(Ala) via its editing domain. The chain is Alanine--tRNA ligase from Staphylococcus epidermidis (strain ATCC 35984 / DSM 28319 / BCRC 17069 / CCUG 31568 / BM 3577 / RP62A).